We begin with the raw amino-acid sequence, 431 residues long: Enolase (431 aa).

Residue Gln167 coordinates (2R)-2-phosphoglycerate. Catalysis depends on Glu209, which acts as the Proton donor. Residues Asp246, Glu289, and Asp316 each contribute to the Mg(2+) site. (2R)-2-phosphoglycerate-binding residues include Lys341, Arg370, Ser371, and Lys392. The active-site Proton acceptor is Lys341.

This sequence belongs to the enolase family. As to quaternary structure, component of the RNA degradosome, a multiprotein complex involved in RNA processing and mRNA degradation. The cofactor is Mg(2+).

It is found in the cytoplasm. The protein resides in the secreted. The protein localises to the cell surface. The catalysed reaction is (2R)-2-phosphoglycerate = phosphoenolpyruvate + H2O. The protein operates within carbohydrate degradation; glycolysis; pyruvate from D-glyceraldehyde 3-phosphate: step 4/5. Its function is as follows. Catalyzes the reversible conversion of 2-phosphoglycerate (2-PG) into phosphoenolpyruvate (PEP). It is essential for the degradation of carbohydrates via glycolysis. This chain is Enolase, found in Shewanella woodyi (strain ATCC 51908 / MS32).